A 332-amino-acid polypeptide reads, in one-letter code: MATLKDQLIHNLLKEEQTPQNKITVVGVGAVGMACAISILMKDLADELALVDVIEDKLKGEMMDLQHGSLFLRTPKIVSGKDYNVTANSKLVIITAGARQQEGESRLNLVQRNVNIFKFIIPNVVKYSPNCKLLIVSNPVDILTYVAWKISGFPKNRVIGSGCNLDSARFRYLMGERLGVHPSSCHGWVLGEHGDSSVPVWSGMNVAGVSLKTLHPDLGTDKDKEQWKEVHKQVVESAYEVIKLKGYTSWAIGLSVADLAESIMKNLRRVHPVSTMIKGLYGIKDDVFLSVPCILGQNGISDLVKVTLTSEEEARLKKSADTLWGIQKELQF.

N-acetylalanine is present on Ala-2. N6-acetyllysine; alternate is present on Lys-5. Lys-5 is modified (N6-succinyllysine; alternate). The residue at position 14 (Lys-14) is an N6-acetyllysine. The residue at position 18 (Thr-18) is a Phosphothreonine. Residue 29–57 participates in NAD(+) binding; sequence GAVGMACAISILMKDLADELALVDVIEDK. The residue at position 57 (Lys-57) is an N6-acetyllysine; alternate. Lys-57 participates in a covalent cross-link: Glycyl lysine isopeptide (Lys-Gly) (interchain with G-Cter in SUMO2); alternate. Lys-81 is subject to N6-acetyllysine. Arg-99 contacts NAD(+). Arg-106 contributes to the substrate binding site. Position 118 is an N6-acetyllysine; alternate (Lys-118). The residue at position 118 (Lys-118) is an N6-succinyllysine; alternate. The residue at position 126 (Lys-126) is an N6-acetyllysine. Substrate-binding residues include Asn-138 and Arg-169. His-193 acts as the Proton acceptor in catalysis. N6-acetyllysine is present on residues Lys-224 and Lys-232. Residue Tyr-239 is modified to Phosphotyrosine. Lys-243 bears the N6-acetyllysine mark. Thr-248 is a substrate binding site. Thr-309 bears the Phosphothreonine mark. The residue at position 310 (Ser-310) is a Phosphoserine. At Lys-318 the chain carries N6-acetyllysine; alternate. The residue at position 318 (Lys-318) is an N6-succinyllysine; alternate. A Phosphothreonine modification is found at Thr-322.

This sequence belongs to the LDH/MDH superfamily. LDH family. As to quaternary structure, homotetramer. Interacts with PTEN upstream reading frame protein MP31. Post-translationally, ISGylated.

It localises to the cytoplasm. It catalyses the reaction (S)-lactate + NAD(+) = pyruvate + NADH + H(+). It participates in fermentation; pyruvate fermentation to lactate; (S)-lactate from pyruvate: step 1/1. Its function is as follows. Interconverts simultaneously and stereospecifically pyruvate and lactate with concomitant interconversion of NADH and NAD(+). This is L-lactate dehydrogenase A chain (LDHA) from Pongo abelii (Sumatran orangutan).